The sequence spans 212 residues: ATP-dependent Clp protease proteolytic subunit 2 (212 aa).

The disordered stretch occupies residues M1–T20. The active-site Nucleophile is S107. H132 is an active-site residue.

This sequence belongs to the peptidase S14 family. Fourteen ClpP subunits assemble into 2 heptameric rings which stack back to back to give a disk-like structure with a central cavity, resembling the structure of eukaryotic proteasomes.

Its subcellular location is the cytoplasm. It catalyses the reaction Hydrolysis of proteins to small peptides in the presence of ATP and magnesium. alpha-casein is the usual test substrate. In the absence of ATP, only oligopeptides shorter than five residues are hydrolyzed (such as succinyl-Leu-Tyr-|-NHMec, and Leu-Tyr-Leu-|-Tyr-Trp, in which cleavage of the -Tyr-|-Leu- and -Tyr-|-Trp bonds also occurs).. Cleaves peptides in various proteins in a process that requires ATP hydrolysis. Has a chymotrypsin-like activity. Plays a major role in the degradation of misfolded proteins. In Cutibacterium acnes (strain DSM 16379 / KPA171202) (Propionibacterium acnes), this protein is ATP-dependent Clp protease proteolytic subunit 2.